A 273-amino-acid chain; its full sequence is Dermonecrotic toxin LruSicTox-alphaIC1d (273 aa).

His5 is an active-site residue. Residues Glu25 and Asp27 each contribute to the Mg(2+) site. Residue His41 is the Nucleophile of the active site. Intrachain disulfides connect Cys45/Cys51 and Cys47/Cys190. Asp85 lines the Mg(2+) pocket.

It belongs to the arthropod phospholipase D family. Class II subfamily. Mg(2+) serves as cofactor. As to expression, expressed by the venom gland.

It is found in the secreted. The catalysed reaction is an N-(acyl)-sphingosylphosphocholine = an N-(acyl)-sphingosyl-1,3-cyclic phosphate + choline. It carries out the reaction an N-(acyl)-sphingosylphosphoethanolamine = an N-(acyl)-sphingosyl-1,3-cyclic phosphate + ethanolamine. It catalyses the reaction a 1-acyl-sn-glycero-3-phosphocholine = a 1-acyl-sn-glycero-2,3-cyclic phosphate + choline. The enzyme catalyses a 1-acyl-sn-glycero-3-phosphoethanolamine = a 1-acyl-sn-glycero-2,3-cyclic phosphate + ethanolamine. Dermonecrotic toxins cleave the phosphodiester linkage between the phosphate and headgroup of certain phospholipids (sphingolipid and lysolipid substrates), forming an alcohol (often choline) and a cyclic phosphate. This toxin acts on sphingomyelin (SM). It may also act on ceramide phosphoethanolamine (CPE), lysophosphatidylcholine (LPC) and lysophosphatidylethanolamine (LPE), but not on lysophosphatidylserine (LPS), and lysophosphatidylglycerol (LPG). It acts by transphosphatidylation, releasing exclusively cyclic phosphate products as second products. Induces dermonecrosis, hemolysis, increased vascular permeability, edema, inflammatory response, and platelet aggregation. The chain is Dermonecrotic toxin LruSicTox-alphaIC1d from Loxosceles rufescens (Mediterranean recluse spider).